Reading from the N-terminus, the 487-residue chain is Glutamyl-tRNA(Gln) amidotransferase subunit A (487 aa).

Catalysis depends on charge relay system residues K77 and S152. The active-site Acyl-ester intermediate is S176.

This sequence belongs to the amidase family. GatA subfamily. As to quaternary structure, heterotrimer of A, B and C subunits.

It carries out the reaction L-glutamyl-tRNA(Gln) + L-glutamine + ATP + H2O = L-glutaminyl-tRNA(Gln) + L-glutamate + ADP + phosphate + H(+). In terms of biological role, allows the formation of correctly charged Gln-tRNA(Gln) through the transamidation of misacylated Glu-tRNA(Gln) in organisms which lack glutaminyl-tRNA synthetase. The reaction takes place in the presence of glutamine and ATP through an activated gamma-phospho-Glu-tRNA(Gln). This is Glutamyl-tRNA(Gln) amidotransferase subunit A from Limosilactobacillus fermentum (strain NBRC 3956 / LMG 18251) (Lactobacillus fermentum).